The following is a 300-amino-acid chain: Ribosomal protein bS6--L-glutamate ligase (300 aa).

One can recognise an ATP-grasp domain in the interval 104 to 287 (MQLLARQGID…IAGKMIRWIE (184 aa)). Residues Lys141, 178 to 179 (EY), Asp187, and 211 to 213 (RSN) each bind ATP. Mg(2+) contacts are provided by Asp248, Glu260, and Asn262. Mn(2+) is bound by residues Asp248, Glu260, and Asn262.

This sequence belongs to the RimK family. Mg(2+) is required as a cofactor. Mn(2+) serves as cofactor.

Its function is as follows. An L-glutamate ligase that catalyzes the ATP-dependent post-translational addition of glutamate residues to the C-terminus of ribosomal protein bS6 (RpsF). Is also able to catalyze the synthesis of poly-alpha-glutamate in vitro, via ATP hydrolysis from unprotected glutamate as substrate. The number of glutamate residues added to either RpsF or to poly-alpha-glutamate changes with pH. This Shigella flexneri serotype 5b (strain 8401) protein is Ribosomal protein bS6--L-glutamate ligase.